The sequence spans 65 residues: Large ribosomal subunit protein uL29 (65 aa).

It belongs to the universal ribosomal protein uL29 family.

This Xylella fastidiosa (strain 9a5c) protein is Large ribosomal subunit protein uL29 (rpmC).